The following is a 493-amino-acid chain: UDP-N-acetylmuramoyl-L-alanyl-D-glutamate--2,6-diaminopimelate ligase (493 aa).

UDP-N-acetyl-alpha-D-muramoyl-L-alanyl-D-glutamate contacts are provided by L30 and S32. Residue 117–123 (GTNGKTT) coordinates ATP. Residues N158, 159-160 (TT), S186, Q192, and R194 contribute to the UDP-N-acetyl-alpha-D-muramoyl-L-alanyl-D-glutamate site. K226 is subject to N6-carboxylysine. Residues R388, 412 to 415 (DNPR), G463, and E467 contribute to the meso-2,6-diaminopimelate site. The short motif at 412–415 (DNPR) is the Meso-diaminopimelate recognition motif element.

This sequence belongs to the MurCDEF family. MurE subfamily. Requires Mg(2+) as cofactor. Carboxylation is probably crucial for Mg(2+) binding and, consequently, for the gamma-phosphate positioning of ATP.

It localises to the cytoplasm. The enzyme catalyses UDP-N-acetyl-alpha-D-muramoyl-L-alanyl-D-glutamate + meso-2,6-diaminopimelate + ATP = UDP-N-acetyl-alpha-D-muramoyl-L-alanyl-gamma-D-glutamyl-meso-2,6-diaminopimelate + ADP + phosphate + H(+). It functions in the pathway cell wall biogenesis; peptidoglycan biosynthesis. In terms of biological role, catalyzes the addition of meso-diaminopimelic acid to the nucleotide precursor UDP-N-acetylmuramoyl-L-alanyl-D-glutamate (UMAG) in the biosynthesis of bacterial cell-wall peptidoglycan. The protein is UDP-N-acetylmuramoyl-L-alanyl-D-glutamate--2,6-diaminopimelate ligase of Vibrio parahaemolyticus serotype O3:K6 (strain RIMD 2210633).